The primary structure comprises 490 residues: Betaine aldehyde dehydrogenase (490 aa).

Residues threonine 26, isoleucine 27, and aspartate 93 each contribute to the K(+) site. An NAD(+)-binding site is contributed by 150 to 152 (GAW). The Charge relay system role is filled by lysine 162. 176–179 (KPSE) serves as a coordination point for NAD(+). A K(+)-binding site is contributed by valine 180. 230-233 (GVAS) serves as a coordination point for NAD(+). Leucine 246 contacts K(+). Glutamate 252 (proton acceptor) is an active-site residue. The NAD(+) site is built by glycine 254, cysteine 286, and glutamate 387. The active-site Nucleophile is cysteine 286. Cysteine sulfenic acid (-SOH) is present on cysteine 286. K(+) is bound by residues lysine 457 and glycine 460. Glutamate 464 (charge relay system) is an active-site residue.

This sequence belongs to the aldehyde dehydrogenase family. Dimer of dimers. K(+) serves as cofactor.

It carries out the reaction betaine aldehyde + NAD(+) + H2O = glycine betaine + NADH + 2 H(+). Its pathway is amine and polyamine biosynthesis; betaine biosynthesis via choline pathway; betaine from betaine aldehyde: step 1/1. Functionally, involved in the biosynthesis of the osmoprotectant glycine betaine. Catalyzes the irreversible oxidation of betaine aldehyde to the corresponding acid. The polypeptide is Betaine aldehyde dehydrogenase (Escherichia coli (strain ATCC 8739 / DSM 1576 / NBRC 3972 / NCIMB 8545 / WDCM 00012 / Crooks)).